A 331-amino-acid chain; its full sequence is Anthranilate phosphoribosyltransferase (331 aa).

5-phospho-alpha-D-ribose 1-diphosphate is bound by residues Gly-79, 82-83 (GD), Ser-87, 89-92 (NIST), 107-115 (KHCNSSISG), and Ser-119. Gly-79 contributes to the anthranilate binding site. A Mg(2+)-binding site is contributed by Ser-91. Residue Asn-110 participates in anthranilate binding. Arg-165 serves as a coordination point for anthranilate. Residues Asp-223 and Glu-224 each contribute to the Mg(2+) site.

The protein belongs to the anthranilate phosphoribosyltransferase family. As to quaternary structure, homodimer. The cofactor is Mg(2+).

It catalyses the reaction N-(5-phospho-beta-D-ribosyl)anthranilate + diphosphate = 5-phospho-alpha-D-ribose 1-diphosphate + anthranilate. The protein operates within amino-acid biosynthesis; L-tryptophan biosynthesis; L-tryptophan from chorismate: step 2/5. Its function is as follows. Catalyzes the transfer of the phosphoribosyl group of 5-phosphorylribose-1-pyrophosphate (PRPP) to anthranilate to yield N-(5'-phosphoribosyl)-anthranilate (PRA). This Buchnera aphidicola subsp. Melaphis rhois protein is Anthranilate phosphoribosyltransferase.